The following is a 346-amino-acid chain: MEEKYLPELMAEKDSLDPSFTHALRLVNQEIEKFQKGEGKDEEKYIDVVINKNMKLGQKVLIPVKQFPKFNFVGKLLGPRGNSLKRLQEETLTKMSILGKGSMRDKAKEEELRKSGEAKYFHLNDDLHVLIEVFAPPAEAYARMGHALEEIKKFLIPDYNDEIRQAQLQELTYLNGGSENADVPVVRGKPTLRTRGVPAPAITRGRGGVTARPVGVVVPRGTPTPRGVLSTRGPVSRGRGLLTPRARGVPPTGYRPPPPPPTQETYGEYDYDDGYGTAYDEQSYDSYDNSYSTPAQSGADYYDYGHGLSEETYDSYGQEEWTNSRHKAPSARTAKGVYRDQPYGRY.

The tract at residues 1 to 160 is involved in homodimerization; sequence MEEKYLPELM…IKKFLIPDYN (160 aa). Lys4 is covalently cross-linked (Glycyl lysine isopeptide (Lys-Gly) (interchain with G-Cter in SUMO2)). The KH domain occupies 61-127; sequence LIPVKQFPKF…AKYFHLNDDL (67 aa). The tract at residues 212 to 251 is interaction with SIAH1; it reads RPVGVVVPRGTPTPRGVLSTRGPVSRGRGLLTPRARGVPP. Over residues 213–228 the composition is skewed to low complexity; the sequence is PVGVVVPRGTPTPRGV. 2 disordered regions span residues 213 to 267 and 318 to 346; these read PVGV…ETYG and QEEW…YGRY. The span at 253–262 shows a compositional bias: pro residues; it reads GYRPPPPPPT.

This sequence belongs to the KHDRBS family. As to quaternary structure, self-associates to form homooligomers; dimerization increases RNA affinity. Interacts with KHDRBS2/SLM-1. Interacts with KHDRBS1/SAM68; heterooligomer formation of KHDRBS family proteins may modulate RNA substrate specificity. Interacts with the splicing regulatory proteins SFRS9, SAFB and YTHDC1. Interacts with HNRPL. Interacts with RBMX, RBMY1A1, p85 subunit of PI3-kinase, SERPINB5. Interacts with SIAH1 which promotes targeting for degradation. Phosphorylated on tyrosine residues. Isoform 1 C-terminal region is tyrosine-rich, but isoform 2 lacking this C-terminal region is also tyrosine-phosphorylated. Ubiquitous with higher expression in testis, skeletal muscle and brain. Expressed in the kidney only in podocytes, the glomerular epithelial cells of the kidney. Strongly expressed after meiosis.

It is found in the nucleus. In terms of biological role, RNA-binding protein that plays a role in the regulation of alternative splicing and influences mRNA splice site selection and exon inclusion. Binds preferentially to the 5'-[AU]UAAA-3' motif in vitro. Binds optimally to RNA containing 5'-[AU]UAA-3' as a bipartite motif spaced by more than 15 nucleotides. Binds poly(A). RNA-binding abilities are down-regulated by tyrosine kinase PTK6. Involved in splice site selection of vascular endothelial growth factor. In vitro regulates CD44 alternative splicing by direct binding to purine-rich exonic enhancer. Can regulate alternative splicing of neurexins NRXN1-3 in the laminin G-like domain 6 containing the evolutionary conserved neurexin alternative spliced segment 4 (AS4) involved in neurexin selective targeting to postsynaptic partners such as neuroligins and LRRTM family members. Targeted, cell-type specific splicing regulation of NRXN1 at AS4 is involved in neuronal glutamatergic synapse function and plasticity. May regulate expression of KHDRBS2/SLIM-1 in defined brain neuron populations by modifying its alternative splicing. Can bind FABP9 mRNA. May play a role as a negative regulator of cell growth. Inhibits cell proliferation. (Microbial infection) Involved in post-transcriptional regulation of HIV-1 gene expression. The polypeptide is KH domain-containing, RNA-binding, signal transduction-associated protein 3 (KHDRBS3) (Homo sapiens (Human)).